The primary structure comprises 243 residues: tRNA pseudouridine synthase A (243 aa).

Asp54 (nucleophile) is an active-site residue. Substrate is bound at residue Tyr112.

Belongs to the tRNA pseudouridine synthase TruA family. In terms of assembly, homodimer.

It catalyses the reaction uridine(38/39/40) in tRNA = pseudouridine(38/39/40) in tRNA. Formation of pseudouridine at positions 38, 39 and 40 in the anticodon stem and loop of transfer RNAs. The protein is tRNA pseudouridine synthase A of Aster yellows witches'-broom phytoplasma (strain AYWB).